A 1129-amino-acid chain; its full sequence is Phytochrome A (1129 aa).

Positions S217–L399 constitute a GAF domain. Residue C322 coordinates phytochromobilin. PAS domains follow at residues V622–K692 and D755–G826. The Histidine kinase domain occupies Y906–A1123.

This sequence belongs to the phytochrome family. Homodimer. Post-translationally, contains one covalently linked phytochromobilin chromophore.

Regulatory photoreceptor which exists in two forms that are reversibly interconvertible by light: the Pr form that absorbs maximally in the red region of the spectrum and the Pfr form that absorbs maximally in the far-red region. Photoconversion of Pr to Pfr induces an array of morphogenic responses, whereas reconversion of Pfr to Pr cancels the induction of those responses. Pfr controls the expression of a number of nuclear genes including those encoding the small subunit of ribulose-bisphosphate carboxylase, chlorophyll A/B binding protein, protochlorophyllide reductase, rRNA, etc. It also controls the expression of its own gene(s) in a negative feedback fashion. In Petroselinum crispum (Parsley), this protein is Phytochrome A (PHYA).